The chain runs to 66 residues: Large ribosomal subunit protein bL35 (66 aa).

Belongs to the bacterial ribosomal protein bL35 family.

This chain is Large ribosomal subunit protein bL35, found in Lysinibacillus sphaericus (strain C3-41).